Here is a 212-residue protein sequence, read N- to C-terminus: Proheparin-binding EGF-like growth factor (212 aa).

The first 18 residues, 1 to 18 (MDGRVVLIHALLTAVCSA), serve as a signal peptide directing secretion. Residues 19–167 (AVGKFGRDGP…PSTYDHTTAL (149 aa)) are Extracellular-facing. Positions 82–108 (SKPQGPVTPKKKGNGNKRRKGKGLGKK) are disordered. Residues 90 to 106 (PKKKGNGNKRRKGKGLG) show a composition bias toward basic residues. Positions 108–148 (KRDPCLRKYKDFCIHGECKYIRELGAPSCICQPGYHGERCH) constitute an EGF-like domain. Intrachain disulfides connect C112–C125, C120–C136, and C138–C147. A propeptide spans 153-212 (PVEHPPSTYDHTTALAVVAVVLSSLCLVIITALLMFRCHKRGVYDVENEEKIKLGITVNH) (C-terminal). A helical transmembrane segment spans residues 168-188 (AVVAVVLSSLCLVIITALLMF). Over 189–212 (RCHKRGVYDVENEEKIKLGITVNH) the chain is Cytoplasmic.

In terms of assembly, interacts with CNIH2.

The protein localises to the secreted. Its subcellular location is the extracellular space. It is found in the cell membrane. Functionally, may be involved in macrophage-mediated cellular proliferation. It is mitogenic for fibroblasts and smooth muscle but not endothelial cells. It is able to bind EGF receptor/EGFR with higher affinity than EGF itself and is a far more potent mitogen for smooth muscle cells than EGF. Plays an important role in the proper development of cranial nerves by inhibiting the migration of the cranial neural crest cells (NCCs) into the odd-numbered neuromeres (r3 and r5) of the hindbrain Plays a role in mediating v-Jun-induced oncogenic transformation. The polypeptide is Proheparin-binding EGF-like growth factor (HBEGF) (Gallus gallus (Chicken)).